Reading from the N-terminus, the 471-residue chain is Phosphatidylserine synthase 2 (471 aa).

The segment at 1–26 (MRRGERRVAGGSGSESPLLEGRRSTE) is disordered. The Cytoplasmic portion of the chain corresponds to 1 to 40 (MRRGERRVAGGSGSESPLLEGRRSTESEVYDDGTNTFFWR). Phosphoserine occurs at positions 12, 14, and 16. A helical transmembrane segment spans residues 41–61 (AHTLTVLFILTCALGYVTLLE). Residues 62 to 74 (ETPQDTAYNTKRG) are Lumenal-facing. The helical transmembrane segment at 75-95 (IVASILVFLCFGVTQAKDGPF) threads the bilayer. The Cytoplasmic portion of the chain corresponds to 96–104 (SRPHPAYWR). The helical transmembrane segment at 105–125 (FWLCVSVVYELFLIFILFQTV) threads the bilayer. Residues 126 to 291 (HDGRQFLKYV…EWKPASSLHR (166 aa)) are Lumenal-facing. Asparagine 159 carries an N-linked (GlcNAc...) asparagine glycan. Residues 292–312 (WLAVCGIILVFLLAELNTFYL) form a helical membrane-spanning segment. Position 313 (lysine 313) is a topological domain, cytoplasmic. A helical membrane pass occupies residues 314–334 (FVLWMPPEHYLVLLRLVFFVN). The Lumenal portion of the chain corresponds to 335–354 (VGGVAMREIYDFMDELKPHR). The chain crosses the membrane as a helical span at residues 355-375 (KLGQQAWLVAAITVTELLIVV). Topologically, residues 376 to 381 (KYDPHT) are cytoplasmic. A helical transmembrane segment spans residues 382–402 (LTLSLPFYISQCWTLGSILVL). Residues 403–471 (TWTVWRFFLR…PAEEGPSAAS (69 aa)) are Lumenal-facing. Residues 423-471 (RQKQQSHQAINNGDGHPGPEDDLPGTGTAEEEGTTNDGVPAEEGPSAAS) form a disordered region.

The protein belongs to the phosphatidyl serine synthase family.

The protein localises to the endoplasmic reticulum membrane. The catalysed reaction is a 1,2-diacyl-sn-glycero-3-phosphoethanolamine + L-serine = a 1,2-diacyl-sn-glycero-3-phospho-L-serine + ethanolamine. The enzyme catalyses 1-hexadecanoyl-2-(9Z-octadecenoyl)-sn-glycero-3-phosphoethanolamine + L-serine = 1-hexadecanoyl-2-(9Z-octadecenoyl)-sn-glycero-3-phospho-L-serine + ethanolamine. It catalyses the reaction 1-hexadecanoyl-2-(4Z,7Z,10Z,13Z,16Z,19Z-docosahexaenoyl)-sn-glycero-3-phosphoethanolamine + L-serine = 1-hexadecanoyl-2-(4Z,7Z,10Z,13Z,16Z,19Z-docosahexaenoyl)-sn-glycero-3-phosphoserine + ethanolamine. It carries out the reaction 1-octadecanoyl-2-(5Z,8Z,11Z,14Z)-eicosatetraenoyl-sn-glycero-3-phosphoethanolamine + L-serine = 1-octadecanoyl-2-(5Z,8Z,11Z,14Z)-eicosatetraenoyl-sn-glycero-3-phosphoserine + ethanolamine. The catalysed reaction is 1-octadecanoyl-2-(4Z,7Z,10Z,13Z,16Z,19Z-docosahexaenoyl)-sn-glycero-3-phosphoethanolamine + L-serine = 1-octadecanoyl-2-(4Z,7Z,10Z,13Z,16Z,19Z-docosahexaenoyl)-sn-glycero-3-phosphoserine + ethanolamine. The enzyme catalyses 1-(1Z-octadecenyl)-2-(4Z,7Z,10Z,13Z,16Z,19Z-docosahexaenoyl)-sn-glycero-3-phosphoethanolamine + L-serine = 1-(1Z-octadecenyl)-2-(4Z,7Z,10Z,13Z,16Z,19Z-docosahexaenoyl)-sn-glycero-3-phospho-L-serine + ethanolamine. It catalyses the reaction 1-octadecanoyl-2-(9Z-octadecenoyl)-sn-glycero-3-phosphoethanolamine + L-serine = 1-octadecanoyl-2-(9Z-octadecenoyl)-sn-glycero-3-phospho-L-serine + ethanolamine. It carries out the reaction 1-(1Z-octadecenyl)-2-(9Z-octadecenoyl)-sn-glycero-3-phosphoethanolamine + L-serine = 1-(1Z-octadecenyl)-2-(9Z-octadecenoyl)-sn-glycero-3-phospho-L-serine + ethanolamine. The catalysed reaction is 1-(1Z-octadecenyl)-2-(5Z,8Z,11Z,14Z- eicosatetraenoyl)-sn-glycero-3-phosphoethanolamine + L-serine = 1-(1Z-octadecenyl)-2-(5Z,8Z,11Z,14Z-eicosatetraenoyl)-sn-glycero-3-phospho-L-serine + ethanolamine. It functions in the pathway phospholipid metabolism; phosphatidylserine biosynthesis. Catalyzes a base-exchange reaction in which the polar head group of phosphatidylethanolamine (PE) or phosphatidylcholine (PC) is replaced by L-serine. Catalyzes the conversion of phosphatatidylethanolamine and does not act on phosphatidylcholine. Can utilize both phosphatidylethanolamine (PE) plasmalogen and diacyl PE as substrate and the latter is six times better utilized, indicating the importance of an ester linkage at the sn-1 position. Although it shows no sn-1 fatty acyl preference, exhibits significant preference towards docosahexaenoic acid (22:6n-3) compared with 18:1 or 20:4 at the sn-2 position. The sequence is that of Phosphatidylserine synthase 2 (Ptdss2) from Rattus norvegicus (Rat).